A 453-amino-acid chain; its full sequence is Putative ABC transporter ATP-binding protein MM_0462 (453 aa).

Residues 4–239 (LETRSLKYSY…QELLKKVGLR (236 aa)) form the ABC transporter domain. Residue 37 to 44 (GQNGSGKS) participates in ATP binding.

Belongs to the ABC transporter superfamily.

It is found in the cell membrane. Its function is as follows. Probably part of an ABC transporter complex. Responsible for energy coupling to the transport system. This Methanosarcina mazei (strain ATCC BAA-159 / DSM 3647 / Goe1 / Go1 / JCM 11833 / OCM 88) (Methanosarcina frisia) protein is Putative ABC transporter ATP-binding protein MM_0462.